Reading from the N-terminus, the 42-residue chain is ASDGRNAAADDKASDPIALTVRGGCCSHPVCYTKNPNCGGRR.

Residues 1–22 (ASDGRNAAADDKASDPIALTVR) constitute a propeptide that is removed on maturation. Intrachain disulfides connect Cys25–Cys31 and Cys26–Cys38. Gly39 is modified (glycine amide).

It belongs to the conotoxin A superfamily. As to expression, expressed by the venom duct.

It localises to the secreted. Functionally, alpha-conotoxins act on postsynaptic membranes, they bind to the nicotinic acetylcholine receptors (nAChR) and thus inhibit them. This toxin potently and selectively inhibits human and rat alpha-6-beta-4/CHRNA6-CHRNB4 nAChR (IC(50)=12 nM on rat nAChR). It exhibits rapid binding and unbinding at this receptor. It also shows activity on rat alpha-6-beta-4/CHRNA6-CHRNB4 (IC(50)=12 nM), human alpha-6/alpha-3-beta-4 (CHRNA6/CHRNA3-CHRNB4) (IC(50)=5.3 nM), rat alpha-6/alpha-3-beta-4 (CHRNA6/CHRNA3-CHRNB4) (IC(50)=18 nM), rat alpha-3-beta-4/CHRNA3-CHRNB4 (IC(50)=320 nM), and rat alpha-6/alpha-3-beta-2-beta-3 (CHRNA6/CHRNA3-CHRNB2-CHRNB3) (IC(50)=4 uM). This is Alpha-conotoxin VnIB from Conus ventricosus (Mediterranean cone).